We begin with the raw amino-acid sequence, 403 residues long: MAKNIPFKLILEKAKDYQADMTRFLRDMVAIPSESCDEKRVVHRIKEEMEKVGFDKVEIDPMGNVLGYIGHGPRLVAMDAHIDTVGIGNIKNWDFDPYEGMETDELIGGRGTSDQEGGMASMVYAGKIIKDLGLEDEYTLLVTGTVQEEDCDGLCWQYIIEQSGIRPEFVVSTEPTDCQVYRGQRGRMEIRIDVQGVSCHGSAPERGDNAIFKMGPILGELQELSQRLGYDEFLGKGTLTVSEIFFTSPSRCAVADSCAVSIDRRLTWGETWEGALDEIRALPAVQKANAVVSMYNYDRPSWTGLVYPTECYFPTWKVEEDHFTVKALVNAYEGLFGKAPVVDKWTFSTNGVSIMGRHGIPVIGFGPGKEPEAHAPNEKTWKSHLVTCAAMYAAIPLSWLATE.

His81 contributes to the Zn(2+) binding site. Residue Asp83 is part of the active site. Asp114 is a Zn(2+) binding site. Residue Glu148 is the Proton acceptor of the active site. Positions 149, 174, and 374 each coordinate Zn(2+).

Belongs to the peptidase M20A family. It depends on Zn(2+) as a cofactor. Requires Co(2+) as cofactor.

This is an uncharacterized protein from Escherichia coli O157:H7.